Consider the following 476-residue polypeptide: mRNA cap guanine-N(7) methyltransferase (476 aa).

Residues 1–14 (MANSAKAEEYEKMS) are compositionally biased toward basic and acidic residues. The interval 1 to 146 (MANSAKAEEY…KQKNLEEGHS (146 aa)) is disordered. The span at 20–50 (ASVNSETESSFNINENTTASGTGLSEKTSVC) shows a compositional bias: polar residues. 3 positions are modified to phosphoserine: Ser-24, Ser-28, and Ser-29. Composition is skewed to basic and acidic residues over residues 54–68 (DIAR…DLVK) and 84–118 (LDPE…DKSS). Ser-118 carries the phosphoserine modification. A Nuclear localization signal motif is present at residues 126-128 (KRK). Positions 129–145 (IALEDVPEKQKNLEEGH) are enriched in basic and acidic residues. One can recognise an mRNA cap 0 methyltransferase domain in the interval 167-475 (SRIFYLRNFN…IYLVFAFEKQ (309 aa)). Residue 176–177 (NN) coordinates mRNA. S-adenosyl-L-methionine is bound by residues Lys-180, Gly-205, Asp-227, Asp-261, Gln-284, and Tyr-289.

The protein belongs to the class I-like SAM-binding methyltransferase superfamily. mRNA cap 0 methyltransferase family. Interacts with importin alpha, leading to stimulate both RNA-binding and methyltransferase activity. Interaction with importin alpha and beta is required for its nuclear localization, importin beta dissociating in response to RanGTP, allowing RNMT-importin alpha to bind RNA substrates. Interacts with elongating form of polymerase II and RNGTT. Interacts with RAMAC, this interaction significantly enhances RNA-binding and cap methyltransferase activity. Widely expressed.

Its subcellular location is the nucleus. The catalysed reaction is a 5'-end (5'-triphosphoguanosine)-ribonucleoside in mRNA + S-adenosyl-L-methionine = a 5'-end (N(7)-methyl 5'-triphosphoguanosine)-ribonucleoside in mRNA + S-adenosyl-L-homocysteine. Methyltransferase activity is activated by RAMAC. Functionally, catalytic subunit of the mRNA-capping methyltransferase RNMT:RAMAC complex that methylates the N7 position of the added guanosine to the 5'-cap structure of mRNAs. Binds RNA containing 5'-terminal GpppC. The protein is mRNA cap guanine-N(7) methyltransferase (RNMT) of Homo sapiens (Human).